Here is a 647-residue protein sequence, read N- to C-terminus: Neuronal PAS domain-containing protein 4-like (647 aa).

Residues 16–29 (KRFRSTKGASKARR) are basic motif; degenerate. One can recognise a bHLH domain in the interval 16–67 (KRFRSTKGASKARRDQMNSEIRNLRALLPISPEHRLSYLHSMSITCTYIRKS). The tract at residues 30–67 (DQMNSEIRNLRALLPISPEHRLSYLHSMSITCTYIRKS) is helix-loop-helix motif. 2 consecutive PAS domains span residues 117–181 (VLQA…SPSG) and 238–274 (SADM…HPDD).

As to quaternary structure, heterodimer; efficient DNA binding requires dimerization with another bHLH protein. As to expression, specifically expressed in endothelial and hematopoietic precursor cells.

The protein resides in the nucleus. Functionally, transcription factor specifically expressed in endothelial and hematopoietic precursor cells that acts as a key regulator of the endothelial differentiation cascade. Acts as an early-response transcription factor that regulates the expression of early regulators of endothelial and haematopoietic differentiation, such as etv2 and tal1. This Danio rerio (Zebrafish) protein is Neuronal PAS domain-containing protein 4-like.